The primary structure comprises 801 residues: Conserved oligomeric Golgi complex subunit 4 (801 aa).

The interval 397–427 (IRSPSGDGDDEENEEARQERHRLRKEAKEQK) is disordered.

This sequence belongs to the COG4 family. As to quaternary structure, component of the conserved oligomeric Golgi complex which is composed of eight different subunits and is required for normal Golgi morphology and localization.

The protein resides in the golgi apparatus membrane. Functionally, required for normal Golgi function. The polypeptide is Conserved oligomeric Golgi complex subunit 4 (cogc-4) (Caenorhabditis elegans).